The chain runs to 96 residues: Copper-sensing transcriptional repressor RicR (96 aa).

At Thr2 the chain carries N-acetylthreonine. 3 residues coordinate Cu cation: Cys38, His63, and Cys67.

Belongs to the CsoR family.

It is found in the cytoplasm. Functionally, under low copper conditions, represses the expression of lpqS, Rv2963, mymT, socA, socB, mmcO and its own expression. In the presence of copper, RicR dissociates from DNA, leading to the expression of the target genes. Members of the RicR regulon are important for copper resistance during infections and full virulence in a mouse model of infection. This is Copper-sensing transcriptional repressor RicR from Mycobacterium tuberculosis (strain ATCC 25618 / H37Rv).